The sequence spans 337 residues: Serpentine receptor class delta-50 (337 aa).

A run of 7 helical transmembrane segments spans residues 10–30 (VLILTIFYNAYFLLAISSQLL), 48–68 (IYLFNILGLQFISTFSAFVLQ), 107–127 (VLFHILQTSLIACATALIIAF), 147–167 (QLVISYCVPLVFLICEVLSPN), 202–222 (SSQTLMLMIGLYGTPFIALVF), 250–270 (GLTLQTLLPLICYCPGFTYYI), and 280–300 (LFVEFAVSPYGFVYTIFDPLL).

It belongs to the nematode receptor-like protein srd family.

It is found in the membrane. This Caenorhabditis elegans protein is Serpentine receptor class delta-50.